Consider the following 234-residue polypeptide: Proteasome subunit alpha type-2 (234 aa).

At alanine 2 the chain carries N-acetylalanine. A Phosphotyrosine modification is found at tyrosine 121.

The protein belongs to the peptidase T1A family. In terms of assembly, the 26S proteasome consists of a 20S proteasome core and two 19S regulatory subunits. The 20S proteasome core is composed of 28 subunits that are arranged in four stacked rings, resulting in a barrel-shaped structure. The two end rings are each formed by seven alpha subunits, and the two central rings are each formed by seven beta subunits. The catalytic chamber with the active sites is on the inside of the barrel.

Its subcellular location is the cytoplasm. It localises to the nucleus. Its function is as follows. The proteasome is a multicatalytic proteinase complex which is characterized by its ability to cleave peptides with Arg, Phe, Tyr, Leu, and Glu adjacent to the leaving group at neutral or slightly basic pH. The proteasome has an ATP-dependent proteolytic activity. PSMA2 may have a potential regulatory effect on another component(s) of the proteasome complex through tyrosine phosphorylation. This is Proteasome subunit alpha type-2 (psma2) from Carassius auratus (Goldfish).